Reading from the N-terminus, the 2070-residue chain is Multiple PDZ domain protein (2070 aa).

The region spanning 1 to 63 (MLEAIDKNRA…SVQQLKDQVN (63 aa)) is the L27 domain. The PDZ 1 domain occupies 137–224 (VFELLKPPSG…TVQLVIARGS (88 aa)). Phosphoserine is present on Ser-230. PDZ domains are found at residues 257-337 (TIEL…ARGA) and 377-463 (DVEL…MRRG). A Phosphoserine modification is found at Ser-483. PDZ domains follow at residues 553–634 (VAHV…CRRT) and 700–786 (HIEL…VAKP). Residues Ser-790 and Ser-1078 each carry the phosphoserine modification. Residues 1008-1089 (TINIAKGNSS…IGPDIKITYV (82 aa)) form the PDZ 6 domain. A disordered region spans residues 1121-1140 (DIPELPEREEGEGEESELQN). One can recognise a PDZ 7 domain in the interval 1151-1243 (RVELWREPSK…PVVFMVQSII (93 aa)). At Arg-1170 the chain carries Omega-N-methylarginine. The interval 1278-1324 (ADKAPSQSESEPEKAPLCSVPPPPPSAFAEMGSDHTQSSASKISQDV) is disordered. Positions 1311 to 1321 (DHTQSSASKIS) are enriched in polar residues. 2 PDZ domains span residues 1350–1433 (MIEL…IRNK) and 1483–1564 (HLEL…HAEN). Positions 1567–1612 (SQAVPSAAGAASGEKKNSSQSLMVPQSGSPEPESIRNTSRSSTPAI) are disordered. Residues 1584–1610 (SSQSLMVPQSGSPEPESIRNTSRSSTP) are compositionally biased toward polar residues. PDZ domains lie at 1629–1712 (TIEI…YRDE) and 1725–1807 (TIEL…GRIK). A phosphoserine mark is found at Ser-1818 and Ser-1824. PDZ domains are found at residues 1862–1948 (TVEM…VAGG) and 1987–2070 (SITL…MVLS).

Interacts with CLDN5, DLG4, GRIN1, F11R/JAM, CLDN1, NG2, CRB1, MPP4 and PALS1. Interacts with HTR2A, HTR2B, HTR2C, PLEKHA1/TAPP1, PLEKHA2/TAPP2, CXADR, SYNGAP1, CAMK2A and CAMK2B. Interacts with FAT4 (via cytoplasmic domain). Interacts with DLL1. In terms of assembly, (Microbial infection) Interacts with human adenovirus type 9 E4-ORF1 protein. As to quaternary structure, (Microbial infection) Interacts with human papillomavirus 18/HPV18 protein E6. In terms of tissue distribution, expressed in heart, brain, placenta, liver, skeletal muscle, kidney and pancreas.

It is found in the cell membrane. It localises to the apical cell membrane. The protein localises to the postsynaptic density. Its subcellular location is the cell projection. The protein resides in the dendrite. It is found in the cell junction. It localises to the tight junction. The protein localises to the synapse. Its subcellular location is the synaptosome. In terms of biological role, member of the NMDAR signaling complex that may play a role in control of AMPAR potentiation and synaptic plasticity in excitatory synapses. Promotes clustering of HT2RC at the cell surface. The protein is Multiple PDZ domain protein (MPDZ) of Homo sapiens (Human).